Here is a 333-residue protein sequence, read N- to C-terminus: Tetraacyldisaccharide 4'-kinase (333 aa).

55-62 (TAGGNGKT) contacts ATP.

Belongs to the LpxK family.

The enzyme catalyses a lipid A disaccharide + ATP = a lipid IVA + ADP + H(+). It participates in glycolipid biosynthesis; lipid IV(A) biosynthesis; lipid IV(A) from (3R)-3-hydroxytetradecanoyl-[acyl-carrier-protein] and UDP-N-acetyl-alpha-D-glucosamine: step 6/6. In terms of biological role, transfers the gamma-phosphate of ATP to the 4'-position of a tetraacyldisaccharide 1-phosphate intermediate (termed DS-1-P) to form tetraacyldisaccharide 1,4'-bis-phosphate (lipid IVA). This Proteus mirabilis (strain HI4320) protein is Tetraacyldisaccharide 4'-kinase.